We begin with the raw amino-acid sequence, 790 residues long: Penicillin-binding protein 1A (790 aa).

The Cytoplasmic segment spans residues 1 to 6 (MYKSLF). A helical; Signal-anchor for type II membrane protein transmembrane segment spans residues 7-27 (FCLKIFAVLILVGCGITAYII). The Periplasmic segment spans residues 28–790 (YHYSRDLPDY…SKEDQSQEIY (763 aa)). Positions 49–220 (TRIYSHDGKL…SELNPERNYA (172 aa)) are transglycosylase. The Proton donor; for transglycosylase activity role is filled by Glu87. The tract at residues 398–711 (DVIVVEPIKD…SNVVLPIFID (314 aa)) is transpeptidase. Ser457 serves as the catalytic Acyl-ester intermediate; for transpeptidase activity.

The protein in the N-terminal section; belongs to the glycosyltransferase 51 family. It in the C-terminal section; belongs to the transpeptidase family.

The protein resides in the cell inner membrane. The enzyme catalyses [GlcNAc-(1-&gt;4)-Mur2Ac(oyl-L-Ala-gamma-D-Glu-L-Lys-D-Ala-D-Ala)](n)-di-trans,octa-cis-undecaprenyl diphosphate + beta-D-GlcNAc-(1-&gt;4)-Mur2Ac(oyl-L-Ala-gamma-D-Glu-L-Lys-D-Ala-D-Ala)-di-trans,octa-cis-undecaprenyl diphosphate = [GlcNAc-(1-&gt;4)-Mur2Ac(oyl-L-Ala-gamma-D-Glu-L-Lys-D-Ala-D-Ala)](n+1)-di-trans,octa-cis-undecaprenyl diphosphate + di-trans,octa-cis-undecaprenyl diphosphate + H(+). It catalyses the reaction Preferential cleavage: (Ac)2-L-Lys-D-Ala-|-D-Ala. Also transpeptidation of peptidyl-alanyl moieties that are N-acyl substituents of D-alanine.. Its pathway is cell wall biogenesis; peptidoglycan biosynthesis. Its function is as follows. Cell wall formation. Synthesis of cross-linked peptidoglycan from the lipid intermediates. The enzyme has a penicillin-insensitive transglycosylase N-terminal domain (formation of linear glycan strands) and a penicillin-sensitive transpeptidase C-terminal domain (cross-linking of the peptide subunits). In Rickettsia felis (strain ATCC VR-1525 / URRWXCal2) (Rickettsia azadi), this protein is Penicillin-binding protein 1A (mrcA).